Reading from the N-terminus, the 89-residue chain is Small ribosomal subunit protein uS15 (89 aa).

This sequence belongs to the universal ribosomal protein uS15 family. In terms of assembly, part of the 30S ribosomal subunit. Forms a bridge to the 50S subunit in the 70S ribosome, contacting the 23S rRNA.

In terms of biological role, one of the primary rRNA binding proteins, it binds directly to 16S rRNA where it helps nucleate assembly of the platform of the 30S subunit by binding and bridging several RNA helices of the 16S rRNA. Its function is as follows. Forms an intersubunit bridge (bridge B4) with the 23S rRNA of the 50S subunit in the ribosome. This Bacillus licheniformis (strain ATCC 14580 / DSM 13 / JCM 2505 / CCUG 7422 / NBRC 12200 / NCIMB 9375 / NCTC 10341 / NRRL NRS-1264 / Gibson 46) protein is Small ribosomal subunit protein uS15.